The primary structure comprises 317 residues: N-acetyl-gamma-glutamyl-phosphate reductase (317 aa).

Cysteine 136 is a catalytic residue.

The protein belongs to the NAGSA dehydrogenase family. Type 1 subfamily.

The protein resides in the cytoplasm. It catalyses the reaction N-acetyl-L-glutamate 5-semialdehyde + phosphate + NADP(+) = N-acetyl-L-glutamyl 5-phosphate + NADPH + H(+). The protein operates within amino-acid biosynthesis; L-arginine biosynthesis; N(2)-acetyl-L-ornithine from L-glutamate: step 3/4. Catalyzes the NADPH-dependent reduction of N-acetyl-5-glutamyl phosphate to yield N-acetyl-L-glutamate 5-semialdehyde. The polypeptide is N-acetyl-gamma-glutamyl-phosphate reductase (Stenotrophomonas maltophilia (strain R551-3)).